The primary structure comprises 272 residues: Pyridoxal phosphate phosphatase YbhA (272 aa).

Catalysis depends on D9, which acts as the Nucleophile. Residue D9 coordinates Mg(2+). L10 is a binding site for phosphate. D11 provides a ligand contact to Mg(2+). Phosphate-binding positions include 43-44 and K200; that span reads TG. Residue D223 coordinates Mg(2+). A phosphate-binding site is contributed by N226.

This sequence belongs to the HAD-like hydrolase superfamily. CbbY/CbbZ/Gph/YieH family. Mg(2+) serves as cofactor. It depends on Mn(2+) as a cofactor. The cofactor is Co(2+). Zn(2+) is required as a cofactor.

It carries out the reaction pyridoxal 5'-phosphate + H2O = pyridoxal + phosphate. In terms of biological role, catalyzes the dephosphorylation of pyridoxal-phosphate (PLP). Can also hydrolyze erythrose-4-phosphate (Ery4P) and fructose-1,6-bis-phosphate (Fru1,6bisP). In Escherichia coli (strain K12), this protein is Pyridoxal phosphate phosphatase YbhA (ybhA).